The following is a 229-amino-acid chain: Protein GrpE (229 aa).

The interval Met1 to Gly89 is disordered. The span at Ala24–Asp36 shows a compositional bias: low complexity. Over residues Glu39–Ala50 the composition is skewed to basic and acidic residues. Positions Lys65–Ser84 are enriched in low complexity.

This sequence belongs to the GrpE family. Homodimer.

It localises to the cytoplasm. In terms of biological role, participates actively in the response to hyperosmotic and heat shock by preventing the aggregation of stress-denatured proteins, in association with DnaK and GrpE. It is the nucleotide exchange factor for DnaK and may function as a thermosensor. Unfolded proteins bind initially to DnaJ; upon interaction with the DnaJ-bound protein, DnaK hydrolyzes its bound ATP, resulting in the formation of a stable complex. GrpE releases ADP from DnaK; ATP binding to DnaK triggers the release of the substrate protein, thus completing the reaction cycle. Several rounds of ATP-dependent interactions between DnaJ, DnaK and GrpE are required for fully efficient folding. This Bifidobacterium animalis subsp. lactis (strain AD011) protein is Protein GrpE.